A 637-amino-acid polypeptide reads, in one-letter code: Chaperone protein HtpG (637 aa).

The interval 1 to 338 (MMELKMHNVK…SPDLPLNISR (338 aa)) is a; substrate-binding. The tract at residues 339 to 558 (ETLQNNRVVE…EGAMDLRMER (220 aa)) is b. Residues 493-512 (KFSPEEKDKENKSDEERAEG) are disordered. A c region spans residues 559–637 (FLREQNQLNY…LNNLLGKVII (79 aa)).

Belongs to the heat shock protein 90 family. As to quaternary structure, homodimer.

Its subcellular location is the cytoplasm. In terms of biological role, molecular chaperone. Has ATPase activity. In Wolbachia sp. subsp. Brugia malayi (strain TRS), this protein is Chaperone protein HtpG.